An 89-amino-acid chain; its full sequence is Large ribosomal subunit protein bL28 (89 aa).

The protein belongs to the bacterial ribosomal protein bL28 family.

The protein is Large ribosomal subunit protein bL28 of Chlamydia felis (strain Fe/C-56) (Chlamydophila felis).